We begin with the raw amino-acid sequence, 145 residues long: Superoxide dismutase [Mn/Fe] (145 aa).

Fe(3+) is bound by residues H10 and H64. The Mn(2+) site is built by H10 and H64.

It belongs to the iron/manganese superoxide dismutase family. Mn(2+) serves as cofactor. Requires Fe(3+) as cofactor.

It carries out the reaction 2 superoxide + 2 H(+) = H2O2 + O2. Destroys superoxide anion radicals which are normally produced within the cells and which are toxic to biological systems. Catalyzes the dismutation of superoxide anion radicals into O2 and H2O2 by successive reduction and oxidation of the transition metal ion at the active site. The protein is Superoxide dismutase [Mn/Fe] (sodA) of Streptococcus acidominimus.